The sequence spans 103 residues: Small ribosomal subunit protein uS10 (103 aa).

It belongs to the universal ribosomal protein uS10 family. As to quaternary structure, part of the 30S ribosomal subunit.

Functionally, involved in the binding of tRNA to the ribosomes. This chain is Small ribosomal subunit protein uS10, found in Leptothrix cholodnii (strain ATCC 51168 / LMG 8142 / SP-6) (Leptothrix discophora (strain SP-6)).